Here is a 462-residue protein sequence, read N- to C-terminus: Myo-inositol transporter 3B (462 aa).

10 consecutive transmembrane segments (helical) span residues 1-21, 31-51, 61-81, 91-111, 194-214, 218-238, 245-265, 289-309, 324-344, and 354-374; these read MAIL…ASSY, IILG…ITET, IGVN…IGAG, LLFA…HYLP, LCGF…LGLS, LGGL…MSLV, GLML…IIGF, VVIG…SHLV, GSGV…VSYL, and GTYG…VFCF.

It belongs to the major facilitator superfamily. Sugar transporter (TC 2.A.1.1) family.

The protein resides in the cell membrane. It catalyses the reaction myo-inositol(out) + H(+)(out) = myo-inositol(in) + H(+)(in). Its function is as follows. Transporter for myo-inositol. This Cryptococcus neoformans var. grubii serotype A (strain H99 / ATCC 208821 / CBS 10515 / FGSC 9487) (Filobasidiella neoformans var. grubii) protein is Myo-inositol transporter 3B.